The chain runs to 921 residues: Isoleucine--tRNA ligase 1 (921 aa).

Residues P57–H67 carry the 'HIGH' region motif. E552 serves as a coordination point for L-isoleucyl-5'-AMP. The short motif at K593–S597 is the 'KMSKS' region element. K596 lines the ATP pocket. The Zn(2+) site is built by C888, C891, C908, and C911.

Belongs to the class-I aminoacyl-tRNA synthetase family. IleS type 1 subfamily. As to quaternary structure, monomer. The cofactor is Zn(2+).

It is found in the cytoplasm. It catalyses the reaction tRNA(Ile) + L-isoleucine + ATP = L-isoleucyl-tRNA(Ile) + AMP + diphosphate. Catalyzes the attachment of isoleucine to tRNA(Ile). As IleRS can inadvertently accommodate and process structurally similar amino acids such as valine, to avoid such errors it has two additional distinct tRNA(Ile)-dependent editing activities. One activity is designated as 'pretransfer' editing and involves the hydrolysis of activated Val-AMP. The other activity is designated 'posttransfer' editing and involves deacylation of mischarged Val-tRNA(Ile). In Bacillus thuringiensis subsp. konkukian (strain 97-27), this protein is Isoleucine--tRNA ligase 1.